Here is a 128-residue protein sequence, read N- to C-terminus: Sulfurtransferase TusD (128 aa).

The Cysteine persulfide intermediate role is filled by cysteine 78.

This sequence belongs to the DsrE/TusD family. Heterohexamer, formed by a dimer of trimers. The hexameric TusBCD complex contains 2 copies each of TusB, TusC and TusD. The TusBCD complex interacts with TusE.

Its subcellular location is the cytoplasm. In terms of biological role, part of a sulfur-relay system required for 2-thiolation of 5-methylaminomethyl-2-thiouridine (mnm(5)s(2)U) at tRNA wobble positions. Accepts sulfur from TusA and transfers it in turn to TusE. This chain is Sulfurtransferase TusD, found in Escherichia coli O127:H6 (strain E2348/69 / EPEC).